A 387-amino-acid polypeptide reads, in one-letter code: Succinyl-diaminopimelate desuccinylase (387 aa).

Position 75 (His75) interacts with Zn(2+). Asp77 is an active-site residue. Asp108 contacts Zn(2+). Glu139 acts as the Proton acceptor in catalysis. The Zn(2+) site is built by Glu140, Glu168, and His357.

It belongs to the peptidase M20A family. DapE subfamily. As to quaternary structure, homodimer. The cofactor is Zn(2+). It depends on Co(2+) as a cofactor.

The catalysed reaction is N-succinyl-(2S,6S)-2,6-diaminopimelate + H2O = (2S,6S)-2,6-diaminopimelate + succinate. It functions in the pathway amino-acid biosynthesis; L-lysine biosynthesis via DAP pathway; LL-2,6-diaminopimelate from (S)-tetrahydrodipicolinate (succinylase route): step 3/3. Its function is as follows. Catalyzes the hydrolysis of N-succinyl-L,L-diaminopimelic acid (SDAP), forming succinate and LL-2,6-diaminopimelate (DAP), an intermediate involved in the bacterial biosynthesis of lysine and meso-diaminopimelic acid, an essential component of bacterial cell walls. This Caulobacter sp. (strain K31) protein is Succinyl-diaminopimelate desuccinylase.